A 116-amino-acid chain; its full sequence is Flagellar transcriptional regulator FlhD (116 aa).

The protein belongs to the FlhD family. Homodimer; disulfide-linked. Forms a heterohexamer composed of two FlhC and four FlhD subunits. Each FlhC binds a FlhD dimer, forming a heterotrimer, and a hexamer assembles by dimerization of two heterotrimers.

The protein resides in the cytoplasm. Functionally, functions in complex with FlhC as a master transcriptional regulator that regulates transcription of several flagellar and non-flagellar operons by binding to their promoter region. Activates expression of class 2 flagellar genes, including fliA, which is a flagellum-specific sigma factor that turns on the class 3 genes. Also regulates genes whose products function in a variety of physiological pathways. This is Flagellar transcriptional regulator FlhD from Serratia proteamaculans (strain 568).